The primary structure comprises 147 residues: Nucleoside diphosphate kinase (147 aa).

ATP is bound by residues lysine 11, phenylalanine 59, arginine 87, threonine 93, arginine 104, and asparagine 114. Catalysis depends on histidine 117, which acts as the Pros-phosphohistidine intermediate.

The protein belongs to the NDK family. Homotetramer. Mg(2+) serves as cofactor.

The protein resides in the cytoplasm. The enzyme catalyses a 2'-deoxyribonucleoside 5'-diphosphate + ATP = a 2'-deoxyribonucleoside 5'-triphosphate + ADP. It carries out the reaction a ribonucleoside 5'-diphosphate + ATP = a ribonucleoside 5'-triphosphate + ADP. In terms of biological role, major role in the synthesis of nucleoside triphosphates other than ATP. The ATP gamma phosphate is transferred to the NDP beta phosphate via a ping-pong mechanism, using a phosphorylated active-site intermediate. This is Nucleoside diphosphate kinase from Anaeromyxobacter dehalogenans (strain 2CP-C).